Reading from the N-terminus, the 316-residue chain is Large ribosomal subunit protein uL10 (316 aa).

Positions 289-316 (AAAAAPAKEAPKEESEESDEDMGFGLFD) are disordered.

Belongs to the universal ribosomal protein uL10 family. P0 forms a pentameric complex by interaction with dimers of P1 and P2. Phosphorylated.

The protein resides in the nucleus. It is found in the cytoplasm. Ribosomal protein P0 is the functional equivalent of E.coli protein L10. In Gallus gallus (Chicken), this protein is Large ribosomal subunit protein uL10 (RPLP0).